We begin with the raw amino-acid sequence, 82 residues long: MDVDHEVKELVKFIKKLGTKGADGKYSVKYGVLFNDDDVANFFEALVGTLKAAKKRGIITFQGEILLQRVHDNVDVILLKDE.

It belongs to the costars family.

Modulates actin dynamics and cell motility. The sequence is that of Protein costars (cosA) from Dictyostelium discoideum (Social amoeba).